The sequence spans 85 residues: Coiled-coil-helix-coiled-coil-helix domain-containing protein 7 (85 aa).

The CHCH domain maps to 13-55 (SNPCLEETDASTKCMDDNRYEKDLCTPYFVKYKNCRKFWNGIM). 2 short sequence motifs (cx9C motif) span residues 16 to 26 (CLEETDASTKC) and 37 to 47 (CTPYFVKYKNC). Cystine bridges form between C16-C47 and C26-C37.

The protein belongs to the CHCHD7 family.

The protein resides in the mitochondrion intermembrane space. This chain is Coiled-coil-helix-coiled-coil-helix domain-containing protein 7 (chchd7), found in Xenopus tropicalis (Western clawed frog).